The primary structure comprises 134 residues: Arsenate reductase (134 aa).

Residues Cys11, Cys83, and Cys90 each act as nucleophile in the active site. 2 cysteine pairs are disulfide-bonded: Cys11/Cys83 and Cys83/Cys90.

The protein belongs to the low molecular weight phosphotyrosine protein phosphatase family. Thioredoxin-coupled ArsC subfamily.

The protein localises to the cytoplasm. It catalyses the reaction arsenate + [thioredoxin]-dithiol + H(+) = arsenite + [thioredoxin]-disulfide + H2O. Catalyzes the reduction of arsenate [As(V)] to arsenite [As(III)]. The polypeptide is Arsenate reductase (Bacillus cereus (strain Q1)).